Here is an 85-residue protein sequence, read N- to C-terminus: Neurotoxin beta-KTx 14.3 (85 aa).

An N-terminal signal peptide occupies residues 1-20; that stretch reads MKQYIFFLALIVLTATFAEA. A propeptide spanning residues 21-37 is cleaved from the precursor; it reads GKKTEILDKVKKVFSKG. One can recognise a BetaSPN-type CS-alpha/beta domain in the interval 49–85; that stretch reads ELGCPFIEKWCEDHCESKKQVGKCENFDCSCVKLGGK. Cystine bridges form between Cys-52-Cys-72, Cys-59-Cys-77, and Cys-63-Cys-79.

The protein belongs to the long chain scorpion toxin family. Class 2 subfamily. Expressed by the venom gland.

The protein resides in the secreted. In terms of biological role, toxin with activity on voltage-gated potassium channels. Moderately and reversibly blocks up to 50% of the activity of Kv7.1/KCNQ1 (tested at 22 uM). 3D-structure modeling of the KCNQ1-toxin complex shows that the toxin interacts with the channel pore domain. Additionally, shows a very weak effect to block voltage-gated potassium channel Kv1.1/KCNA1. Functionally, has a very weak effect to block voltage-gated potassium channel Kv1.1/KCNA1. This is Neurotoxin beta-KTx 14.3 from Lychas mucronatus (Chinese swimming scorpion).